The following is a 255-amino-acid chain: MDLIPAIDLMNGKCVRLFKGDFNKRKDFAKEPHEQAEFWEREGAKYIHIVDLDAAKTGSPTNDKSIKKIAKTVNIPIQIGGGIRSQERIEQLFSYGVEKVIMGTSAIENKELVKDLSNKFPGRIIVGIDAKDGKVSTRGWLEQSNIFATDLVKEFSSFKIASFIVTDINTDGTLEGTNEEFIKSILEITDIPVIASGGVGSISDLLSLVKFENSGLFGVIVGKALYENKFTINEANNVLSAERLNDIDLNTNYYA.

The active-site Proton acceptor is D8. D129 acts as the Proton donor in catalysis.

This sequence belongs to the HisA/HisF family.

It localises to the cytoplasm. The catalysed reaction is 1-(5-phospho-beta-D-ribosyl)-5-[(5-phospho-beta-D-ribosylamino)methylideneamino]imidazole-4-carboxamide = 5-[(5-phospho-1-deoxy-D-ribulos-1-ylimino)methylamino]-1-(5-phospho-beta-D-ribosyl)imidazole-4-carboxamide. It functions in the pathway amino-acid biosynthesis; L-histidine biosynthesis; L-histidine from 5-phospho-alpha-D-ribose 1-diphosphate: step 4/9. This Prochlorococcus marinus (strain AS9601) protein is 1-(5-phosphoribosyl)-5-[(5-phosphoribosylamino)methylideneamino] imidazole-4-carboxamide isomerase.